A 61-amino-acid chain; its full sequence is uncharacterized protein (61 aa).

Positions 10–61 form a coiled coil; sequence YEEENDNEDFEEEVELSREDLNQIINELAPFLIKLLTDLTELTQKKEESENE.

This is an uncharacterized protein from Acidianus bottle-shaped virus (isolate Italy/Pozzuoli) (ABV).